The primary structure comprises 766 residues: Protein sak1 (766 aa).

Residues 101-176 (GICWLKRACE…YHYCGIKLRG (76 aa)) constitute a DNA-binding region (RFX-type winged-helix). Residues Ser223, Ser224, and Ser227 each carry the phosphoserine modification. Disordered regions lie at residues 271–308 (PQAH…QPTY) and 708–731 (LQEH…QQQQ). Over residues 279 to 289 (HLSQSNVPPQL) the composition is skewed to polar residues. Low complexity-rich tracts occupy residues 290–308 (SHSS…QPTY) and 715–731 (QQHF…QQQQ).

The protein belongs to the RFX family.

It localises to the nucleus. In terms of biological role, positively regulates cyclic AMP-dependent protein kinase-mediated exit from the mitotic cell cycle. The polypeptide is Protein sak1 (sak1) (Schizosaccharomyces pombe (strain 972 / ATCC 24843) (Fission yeast)).